Here is a 148-residue protein sequence, read N- to C-terminus: Trypsin inhibitor CMe (148 aa).

Positions 1-24 are cleaved as a signal peptide; it reads MAFKYQLLLSAAVMLAILVATATS.

It belongs to the protease inhibitor I6 (cereal trypsin/alpha-amylase inhibitor) family. In terms of processing, five disulfide bonds, which are essential for the inhibitor activity, are probably present. In terms of tissue distribution, expressed in the developing endosperm. Not detected in embryo, aleurone, coleoptile, roots and leaves.

It is found in the secreted. Its function is as follows. Inhibits trypsin in vitro. Probably plays a protective role through inhibition of insect midgut proteases. The sequence is that of Trypsin inhibitor CMe (ITR1) from Hordeum vulgare (Barley).